The following is a 334-amino-acid chain: L-lactate dehydrogenase B chain (334 aa).

Position 2 is an N-acetylalanine (Ala2). Position 7 is an N6-acetyllysine (Lys7). Residues 30-58 and Arg100 each bind NAD(+); that span reads GQVG…LEDK. At Ser44 the chain carries Phosphoserine. Lys58 is subject to N6-acetyllysine. Substrate is bound at residue Arg107. Lys119 bears the N6-acetyllysine mark. Asn139 lines the NAD(+) pocket. Substrate is bound by residues Asn139 and Arg170. His194 (proton acceptor) is an active-site residue. The residue at position 240 (Tyr240) is a Phosphotyrosine. Thr249 contacts substrate. An N6-acetyllysine modification is found at Lys329.

It belongs to the LDH/MDH superfamily. LDH family. As to quaternary structure, homotetramer. Interacts with PTEN upstream reading frame protein MP31; the interaction leads to inhibition of mitochondrial lactate dehydrogenase activity, preventing conversion of lactate to pyruvate in mitochondria.

It is found in the cytoplasm. It localises to the mitochondrion inner membrane. The enzyme catalyses (S)-lactate + NAD(+) = pyruvate + NADH + H(+). It functions in the pathway fermentation; pyruvate fermentation to lactate; (S)-lactate from pyruvate: step 1/1. Functionally, interconverts simultaneously and stereospecifically pyruvate and lactate with concomitant interconversion of NADH and NAD(+). The polypeptide is L-lactate dehydrogenase B chain (Ldhb) (Rattus norvegicus (Rat)).